Reading from the N-terminus, the 208-residue chain is Small ribosomal subunit protein uS4 (208 aa).

In terms of domain architecture, S4 RNA-binding spans 98–166; sequence SRLDNVVYRM…VKEAIEASRN (69 aa).

The protein belongs to the universal ribosomal protein uS4 family. As to quaternary structure, part of the 30S ribosomal subunit. Contacts protein S5. The interaction surface between S4 and S5 is involved in control of translational fidelity.

Functionally, one of the primary rRNA binding proteins, it binds directly to 16S rRNA where it nucleates assembly of the body of the 30S subunit. In terms of biological role, with S5 and S12 plays an important role in translational accuracy. This is Small ribosomal subunit protein uS4 from Kosmotoga olearia (strain ATCC BAA-1733 / DSM 21960 / TBF 19.5.1).